The sequence spans 163 residues: MAKRNIRIMGDSILNKTSKVIEEVTPKIDTLIDDMLDTMYDAGGVGLAAPQVGVLKRLVVIDVSLEGNEPIILINPEIISTDGEQTGDEGCLSLPGKAGIVTRPNYVKVKAYDRHMKPFEVEGEGLLARAFCHEIDHLDGILYVEKVNGEVHEVTSYDEEEEE.

Residues Cys-91 and His-133 each contribute to the Fe cation site. Glu-134 is a catalytic residue. His-137 lines the Fe cation pocket.

The protein belongs to the polypeptide deformylase family. Fe(2+) is required as a cofactor.

The enzyme catalyses N-terminal N-formyl-L-methionyl-[peptide] + H2O = N-terminal L-methionyl-[peptide] + formate. Removes the formyl group from the N-terminal Met of newly synthesized proteins. Requires at least a dipeptide for an efficient rate of reaction. N-terminal L-methionine is a prerequisite for activity but the enzyme has broad specificity at other positions. This chain is Peptide deformylase, found in Lachnoclostridium phytofermentans (strain ATCC 700394 / DSM 18823 / ISDg) (Clostridium phytofermentans).